An 840-amino-acid chain; its full sequence is ATP-dependent RNA helicase DRS1 (840 aa).

Disordered regions lie at residues 1-133 (MAGK…GGAT) and 146-321 (AEDR…NSTF). Residues 51–66 (SRVEPSSKKRRNEEST) are compositionally biased toward basic and acidic residues. A compositionally biased stretch (acidic residues) spans 105–127 (GEDEEEEEDEEGEEGLLDSDFEF). Positions 146–191 (AEDRDKQGNMGEAKKGVDLDEILCRRRQKKLESQEKKTREAAKSNV) are enriched in basic and acidic residues. Residues 193–223 (DSFEGLSDDDGHNEDENEDNEMPNFDDDELL) show a composition bias toward acidic residues. Over residues 238–249 (EQGKANADKGSD) the composition is skewed to basic and acidic residues. Acidic residues-rich tracts occupy residues 250-266 (DESM…DASD) and 285-294 (SSDSEEEDPE). Residues 319 to 347 (STFQNFNLSRPILRGLAAVGFSAPTPIQR) carry the Q motif motif. A Helicase ATP-binding domain is found at 350–524 (IPVGLLGKDL…RVGLNRPVRL (175 aa)). Residue 363–370 (AVTGSGKT) coordinates ATP. The short motif at 472–475 (DEAD) is the DEAD box element. Residues 554–733 (YLVLLCNTIY…EKQLAQAEMQ (180 aa)) form the Helicase C-terminal domain. The disordered stretch occupies residues 766–840 (KKRALSELNG…DKVKAKKAAR (75 aa)). Basic and acidic residues predominate over residues 786–822 (KLSGKEKKKLDDNRLREEGKIWKKGKKERESKGDMRS). A compositionally biased stretch (basic residues) spans 824–840 (GKGKAKKDKVKAKKAAR).

It belongs to the DEAD box helicase family. DDX27/DRS1 subfamily. In terms of assembly, associates with pre-ribosomal particles.

Its subcellular location is the nucleus. It localises to the nucleolus. It catalyses the reaction ATP + H2O = ADP + phosphate + H(+). Its function is as follows. ATP-binding RNA helicase involved in ribosome assembly. This Coccidioides immitis (strain RS) (Valley fever fungus) protein is ATP-dependent RNA helicase DRS1 (DRS1).